The chain runs to 305 residues: Aspartate carbamoyltransferase catalytic subunit (305 aa).

Positions 56 and 57 each coordinate carbamoyl phosphate. Residue Lys85 coordinates L-aspartate. Carbamoyl phosphate contacts are provided by Arg106, His134, and Gln137. 2 residues coordinate L-aspartate: Arg167 and Arg227. Carbamoyl phosphate-binding residues include Leu266 and Pro267.

This sequence belongs to the aspartate/ornithine carbamoyltransferase superfamily. ATCase family. Heterooligomer of catalytic and regulatory chains.

The enzyme catalyses carbamoyl phosphate + L-aspartate = N-carbamoyl-L-aspartate + phosphate + H(+). It functions in the pathway pyrimidine metabolism; UMP biosynthesis via de novo pathway; (S)-dihydroorotate from bicarbonate: step 2/3. Its function is as follows. Catalyzes the condensation of carbamoyl phosphate and aspartate to form carbamoyl aspartate and inorganic phosphate, the committed step in the de novo pyrimidine nucleotide biosynthesis pathway. In Thermoplasma volcanium (strain ATCC 51530 / DSM 4299 / JCM 9571 / NBRC 15438 / GSS1), this protein is Aspartate carbamoyltransferase catalytic subunit.